Reading from the N-terminus, the 156-residue chain is ATP synthase subunit b (156 aa).

A helical membrane pass occupies residues 11 to 31 (AIAFVIFVWFCMKYVWPPLMA).

Belongs to the ATPase B chain family. As to quaternary structure, F-type ATPases have 2 components, F(1) - the catalytic core - and F(0) - the membrane proton channel. F(1) has five subunits: alpha(3), beta(3), gamma(1), delta(1), epsilon(1). F(0) has three main subunits: a(1), b(2) and c(10-14). The alpha and beta chains form an alternating ring which encloses part of the gamma chain. F(1) is attached to F(0) by a central stalk formed by the gamma and epsilon chains, while a peripheral stalk is formed by the delta and b chains.

It is found in the cell inner membrane. In terms of biological role, f(1)F(0) ATP synthase produces ATP from ADP in the presence of a proton or sodium gradient. F-type ATPases consist of two structural domains, F(1) containing the extramembraneous catalytic core and F(0) containing the membrane proton channel, linked together by a central stalk and a peripheral stalk. During catalysis, ATP synthesis in the catalytic domain of F(1) is coupled via a rotary mechanism of the central stalk subunits to proton translocation. Functionally, component of the F(0) channel, it forms part of the peripheral stalk, linking F(1) to F(0). This chain is ATP synthase subunit b, found in Klebsiella pneumoniae (strain 342).